Consider the following 421-residue polypeptide: Inhibitor of growth protein 3 (421 aa).

Positions 129 to 164 (PSQPVNNHHAHSHTPVEKRKYNPTSHHTATDHIPEK) are disordered. Glycyl lysine isopeptide (Lys-Gly) (interchain with G-Cter in SUMO2) cross-links involve residues lysine 148, lysine 165, and lysine 167. Position 181 is an N6-acetyllysine (lysine 181). A Glycyl lysine isopeptide (Lys-Gly) (interchain with G-Cter in SUMO2) cross-link involves residue lysine 256. An N6-acetyllysine modification is found at lysine 264. The disordered stretch occupies residues 286–324 (TQNASSSAADSRSGRKSKNNTKSSSQQSSSSSSSSSSSS). A compositionally biased stretch (low complexity) spans 308–324 (SSSQQSSSSSSSSSSSS). A PHD-type zinc finger spans residues 363–412 (PRYCICNQVSYGEMVGCDNQDCPIEWFHYGCVGLTEAPKGKWFCPQCTAA). Residues cysteine 366, cysteine 368, cysteine 379, cysteine 384, histidine 390, cysteine 393, cysteine 406, and cysteine 409 each coordinate Zn(2+).

The protein belongs to the ING family. As to quaternary structure, interacts with H3K4me3 and to a lesser extent with H3K4me2. Component of the NuA4 histone acetyltransferase complex which contains the catalytic subunit KAT5/TIP60 and the subunits EP400, TRRAP/PAF400, BRD8/SMAP, EPC1, DMAP1/DNMAP1, RUVBL1/TIP49, RUVBL2, ING3, actin, ACTL6A/BAF53A, MORF4L1/MRG15, MORF4L2/MRGX, MRGBP, YEATS4/GAS41, VPS72/YL1 and MEAF6. The NuA4 complex interacts with MYC. HTATTIP/TIP60, EPC1, and ING3 together constitute a minimal HAT complex termed Piccolo NuA4. Component of a SWR1-like complex.

The protein localises to the nucleus. Component of the NuA4 histone acetyltransferase (HAT) complex which is involved in transcriptional activation of select genes principally by acetylation of nucleosomal histones H4 and H2A. This modification may both alter nucleosome - DNA interactions and promote interaction of the modified histones with other proteins which positively regulate transcription. This complex may be required for the activation of transcriptional programs associated with oncogene and proto-oncogene mediated growth induction, tumor suppressor mediated growth arrest and replicative senescence, apoptosis, and DNA repair. NuA4 may also play a direct role in DNA repair when directly recruited to sites of DNA damage. Component of a SWR1-like complex that specifically mediates the removal of histone H2A.Z/H2AZ1 from the nucleosome. The protein is Inhibitor of growth protein 3 (Ing3) of Rattus norvegicus (Rat).